Reading from the N-terminus, the 662-residue chain is Polyadenylate-binding protein 4 (662 aa).

Positions 1–23 (MAQVQAPSSHSPPPPAVVNDGAA) are disordered. RRM domains follow at residues 46–124 (CSLY…YSSR), 134–211 (GNLF…PFLR), 225–302 (TNVY…KAQK), and 328–405 (LNLY…LAQR). Low complexity-rich tracts occupy residues 480-489 (PMMQPGQQGP) and 506-518 (QQPMPYMQPQMMP). Disordered stretches follow at residues 480–518 (PMMQPGQQGPRPGGRRSGDGPMRHQHQQPMPYMQPQMMP) and 634–662 (NQPSSQGSEGNKSGSPSDLLASLSINDHL). The region spanning 558–635 (SAGQLATSLA…ALDVLRNVNQ (78 aa)) is the PABC domain. Residues 634–649 (NQPSSQGSEGNKSGSP) are compositionally biased toward polar residues.

Belongs to the polyadenylate-binding protein type-1 family. Interacts with ERD15/CID1. Interacts with Turnip mosaic virus (TuMV) VPg-Pro.

It localises to the cytoplasm. The protein resides in the nucleus. In terms of biological role, binds the poly(A) tail of mRNA. Appears to be an important mediator of the multiple roles of the poly(A) tail in mRNA biogenesis, stability and translation. During infection with potyvirus TuMV, acts as a potential integral component of the viral replicase complex that could play an important role in the regulation of potyviral RNA-dependent RNA polymerase (RdRp). The chain is Polyadenylate-binding protein 4 (PAB4) from Arabidopsis thaliana (Mouse-ear cress).